We begin with the raw amino-acid sequence, 685 residues long: MLLSLLNSARLRPELLILVLMVMIISMFVIPLPTYLVDFLIALNIVLAILVFMGSFYIDRILSFSTFPAVLLITTLFRLALSISTSRLILIEADAGEIIATFGQFVIGDSLAVGFVVFSIVTVVQFIVITKGSERVAEVAARFSLDGMPGKQMSIDADLKAGIIDADAARERRSVLERESQLYGSFDGAMKFIKGDAIAGIIIIFVNFIGGISVGMTRHGMDLSSALSTYTMLTIGDGLVAQIPALLIAISAGFIVTRVNGDSDNMGRNIMTQLLNNPFVLVVTAILTISMGTLPGFPLPVFVILSVVLSVLFYFKFREAKRSAAKPKTSKGEQPLSIEEKEGSSLGLIGDLDKVSTETVPLILLVPKSRREDLEKAQLAERLRSQFFIDYGVRLPEVLLRDGEGLDDNSIVLLINEIRVEQFTVYFDLMRVVNYSDEVVSFGINPTIHQQGSSQYFWVTHEEGEKLRELGYVLRNALDELYHCLAVTLARNVNEYFGIQETKHMLDQLEAKFPDLLKEVLRHATVQRISEVLQRLLSERVSVRNMKLIMEALALWAPREKDVINLVEHIRGAMARYICHKFANGGELRAVMVSAEVEDVIRKGIRQTSGSTFLSLDPEASANLMDLITLKLDDLLIAHKDLVLLTSVDVRRFIKKMIEGRFPDLEVLSFGEIADSKSVNVIKTI.

The next 8 membrane-spanning stretches (helical) occupy residues 17–37 (ILVL…TYLV), 39–59 (FLIA…FYID), 61–81 (ILSF…RLAL), 110–130 (SLAV…IVIT), 197–217 (AIAG…VGMT), 235–255 (IGDG…AGFI), 274–294 (LLNN…MGTL), and 295–315 (PGFP…LFYF).

Belongs to the FHIPEP (flagella/HR/invasion proteins export pore) family.

The protein resides in the cell inner membrane. Its function is as follows. Involved in the invasion of the cells of the intestinal epithelium. Could be involved in the translocation of the InvE protein. The protein is Invasion protein InvA (invA) of Salmonella typhi.